We begin with the raw amino-acid sequence, 195 residues long: Small ribosomal subunit protein bS16 (195 aa).

The span at 171 to 181 (PEAPVAAAEPA) shows a compositional bias: low complexity. Residues 171–195 (PEAPVAAAEPAPEVKAEEKEEGGEA) are disordered.

It belongs to the bacterial ribosomal protein bS16 family.

This is Small ribosomal subunit protein bS16 from Chlorobium luteolum (strain DSM 273 / BCRC 81028 / 2530) (Pelodictyon luteolum).